The sequence spans 839 residues: Probable beta-glucosidase I (839 aa).

N197 is a glycosylation site (N-linked (GlcNAc...) asparagine). D225 is a catalytic residue. The 161-residue stretch at 395-555 folds into the PA14 domain; sequence DGKTGFSFKV…GQEELISNAV (161 aa). Residue N620 is glycosylated (N-linked (GlcNAc...) asparagine).

Belongs to the glycosyl hydrolase 3 family.

The protein resides in the secreted. It catalyses the reaction Hydrolysis of terminal, non-reducing beta-D-glucosyl residues with release of beta-D-glucose.. It functions in the pathway glycan metabolism; cellulose degradation. Beta-glucosidases are one of a number of cellulolytic enzymes involved in the degradation of cellulosic biomass. Catalyzes the last step releasing glucose from the inhibitory cellobiose. The polypeptide is Probable beta-glucosidase I (bglI) (Aspergillus flavus (strain ATCC 200026 / FGSC A1120 / IAM 13836 / NRRL 3357 / JCM 12722 / SRRC 167)).